The following is a 214-amino-acid chain: Large ribosomal subunit protein uL4 (214 aa).

The interval 43–83 (RRQAGTHKAKSRSEVNRTTKKSIKQKGSGGARHGSRNAPIF) is disordered.

It belongs to the universal ribosomal protein uL4 family. In terms of assembly, part of the 50S ribosomal subunit.

Its function is as follows. One of the primary rRNA binding proteins, this protein initially binds near the 5'-end of the 23S rRNA. It is important during the early stages of 50S assembly. It makes multiple contacts with different domains of the 23S rRNA in the assembled 50S subunit and ribosome. Functionally, forms part of the polypeptide exit tunnel. This Hyphomonas neptunium (strain ATCC 15444) protein is Large ribosomal subunit protein uL4.